The chain runs to 55 residues: Large ribosomal subunit protein bL33B (55 aa).

Belongs to the bacterial ribosomal protein bL33 family.

This is Large ribosomal subunit protein bL33B from Rhodococcus jostii (strain RHA1).